The sequence spans 923 residues: Protocadherin gamma-B5 (923 aa).

A signal peptide spans 1-30 (MGSGAGELGRAERLPVLFLFLLSLFCPALC). 6 consecutive Cadherin domains span residues 31–133 (EQIR…TPKF), 134–242 (TQNS…PPVF), 243–343 (NRDV…SPEV), 344–448 (TFHS…APVF), 449–558 (HQAS…APRV), and 566–671 (DGSA…LPDI). Residues 31–687 (EQIRYRIPEE…SDPQAELQFY (657 aa)) are Extracellular-facing. 2 N-linked (GlcNAc...) asparagine glycosylation sites follow: N415 and N541. A helical transmembrane segment spans residues 688–708 (LVVALALISVLFLLAVILAVA). Topologically, residues 709–923 (LRLRRSSSPA…KKKSGKKEKK (215 aa)) are cytoplasmic. 2 disordered regions span residues 794–832 (TSHP…WPNN) and 893–923 (ATLT…KEKK). Residues 807-832 (WRFSQAQRPGTSGSQNGDDTGTWPNN) are compositionally biased toward polar residues. Basic residues predominate over residues 913–923 (NKKKSGKKEKK).

Its subcellular location is the cell membrane. Potential calcium-dependent cell-adhesion protein. May be involved in the establishment and maintenance of specific neuronal connections in the brain. The chain is Protocadherin gamma-B5 (PCDHGB5) from Homo sapiens (Human).